A 662-amino-acid chain; its full sequence is UvrABC system protein B (662 aa).

Positions 31–188 (DNIEGGEKAQ…NDLVDIQFER (158 aa)) constitute a Helicase ATP-binding domain. ATP is bound at residue 44 to 51 (GATGTGKT). Positions 97-120 (YYDYYQPEAYVPSSDTYIEKDSSV) match the Beta-hairpin motif. In terms of domain architecture, Helicase C-terminal spans 435–601 (QIDDLLGEIN…TIKKEIRDLI (167 aa)). Residues 626-661 (KDMIKKLEGQMQEAAGLLDFELAAQIRDMILEIKAM) enclose the UVR domain.

Belongs to the UvrB family. In terms of assembly, forms a heterotetramer with UvrA during the search for lesions. Interacts with UvrC in an incision complex.

Its subcellular location is the cytoplasm. Functionally, the UvrABC repair system catalyzes the recognition and processing of DNA lesions. A damage recognition complex composed of 2 UvrA and 2 UvrB subunits scans DNA for abnormalities. Upon binding of the UvrA(2)B(2) complex to a putative damaged site, the DNA wraps around one UvrB monomer. DNA wrap is dependent on ATP binding by UvrB and probably causes local melting of the DNA helix, facilitating insertion of UvrB beta-hairpin between the DNA strands. Then UvrB probes one DNA strand for the presence of a lesion. If a lesion is found the UvrA subunits dissociate and the UvrB-DNA preincision complex is formed. This complex is subsequently bound by UvrC and the second UvrB is released. If no lesion is found, the DNA wraps around the other UvrB subunit that will check the other stand for damage. This chain is UvrABC system protein B, found in Streptococcus gordonii (strain Challis / ATCC 35105 / BCRC 15272 / CH1 / DL1 / V288).